The sequence spans 274 residues: Orotidine 5'-phosphate decarboxylase (274 aa).

The active-site Proton donor is lysine 95.

The protein belongs to the OMP decarboxylase family. Type 2 subfamily.

It catalyses the reaction orotidine 5'-phosphate + H(+) = UMP + CO2. The protein operates within pyrimidine metabolism; UMP biosynthesis via de novo pathway; UMP from orotate: step 2/2. The chain is Orotidine 5'-phosphate decarboxylase from Paracidovorax citrulli (strain AAC00-1) (Acidovorax citrulli).